The primary structure comprises 694 residues: E3 ubiquitin-protein ligase SPL11 (694 aa).

Over residues 1-12 (MAGDRAEEEEGE) the composition is skewed to acidic residues. Disordered stretches follow at residues 1–21 (MAGD…ARAA) and 343–363 (NGME…ACSS). Positions 272–346 (TIPDEFRCPI…SQWCETNGME (75 aa)) constitute a U-box domain. Residues 350-363 (RSTQPNKPTPACSS) are compositionally biased toward polar residues. 6 ARM repeats span residues 398 to 438 (NANN…NLSI), 439 to 479 (HEDN…SLSV), 480 to 520 (IDEY…NLCI), 521 to 561 (YQGN…ILSS), 562 to 602 (HPEG…HLCS), and 603 to 650 (GEHH…FLVQ). Over residues 650 to 667 (QQQEEQESQSQASAQVPP) the composition is skewed to low complexity. The disordered stretch occupies residues 650–694 (QQQEEQESQSQASAQVPPQATPEQVPENDIPEQLDSPASQYPMVV).

Interacts with SPIN1 (via N-terminus). In terms of tissue distribution, highly expressed in leaf, at intermediate levels in shoot and weakly in root.

It localises to the nucleus. It is found in the cytoplasm. It carries out the reaction S-ubiquitinyl-[E2 ubiquitin-conjugating enzyme]-L-cysteine + [acceptor protein]-L-lysine = [E2 ubiquitin-conjugating enzyme]-L-cysteine + N(6)-ubiquitinyl-[acceptor protein]-L-lysine.. It functions in the pathway protein modification; protein ubiquitination. In terms of biological role, E3 ubiquitin-protein ligase that negatively regulates programmed cell death and disease resistance. Participates in flowering time control by mediating ubiquitination and subsequent proteasomal degradation of SPIN1. This Oryza sativa subsp. japonica (Rice) protein is E3 ubiquitin-protein ligase SPL11 (SPL11).